Here is a 90-residue protein sequence, read N- to C-terminus: Alpha-latrotoxin associated low molecular weight protein (90 aa).

A signal peptide spans 1 to 18 (MNKLFFVVFLCLIISVLA).

This sequence belongs to the arthropod CHH/MIH/GIH/VIH hormone family. As to expression, expressed by the venom gland.

The protein localises to the secreted. Its function is as follows. May increase the toxicity of alpha-latrotoxin and/or other venom components. Is non-toxic to mice and to the cockroach Periplaneta americana. The chain is Alpha-latrotoxin associated low molecular weight protein from Latrodectus geometricus (Brown widow spider).